A 374-amino-acid polypeptide reads, in one-letter code: MKFFNREKEINKILSIIEGEPNNIYFIYGSLNSGKSTLMREIVVNRLDISKYIPFFIDFRTRNILNVDNFIECLFEVDEKSEIDDFREYAKSLADLLVKGSEEISKYYLGMPIKIPKPFFDKIFNKKDKSADVYQYIEYLFAKLNEKGKKPILIFDELQMIKEITLNGNRKLLWSLFQFLVALTKVQHLCHVFCLSSDSLFIEYVYKTGELEGRADYILVDDFDKQTALKFIDFLAKEILNKKLPKDEKELIYSYVGGKPVLIIKVIDKLRYENLNDILDFMLKDATQKLKYFLNDLDYIKPKVEVGDEVIELKKEDIVKALKLFKDSYEISDSEVAKPIYVYLVKKNILFLNPIEGILKPQSFLIWNAIKRLL.

29-36 (GSLNSGKS) contributes to the ATP binding site.

Belongs to the archaeal ATPase family.

This is an uncharacterized protein from Methanocaldococcus jannaschii (strain ATCC 43067 / DSM 2661 / JAL-1 / JCM 10045 / NBRC 100440) (Methanococcus jannaschii).